The sequence spans 330 residues: Ferredoxin--NADP reductase (330 aa).

7 residues coordinate FAD: Glu-35, Gln-43, Tyr-48, Val-90, Phe-123, Asp-285, and Thr-326.

It belongs to the ferredoxin--NADP reductase type 2 family. In terms of assembly, homodimer. FAD serves as cofactor.

The catalysed reaction is 2 reduced [2Fe-2S]-[ferredoxin] + NADP(+) + H(+) = 2 oxidized [2Fe-2S]-[ferredoxin] + NADPH. The polypeptide is Ferredoxin--NADP reductase (Streptococcus pyogenes serotype M1).